Consider the following 294-residue polypeptide: NAD kinase (294 aa).

The active-site Proton acceptor is the Asp-74. NAD(+) is bound by residues 74 to 75, Arg-79, 149 to 150, Asp-179, 190 to 195, and Ala-214; these read DG, NE, and TGYSMS.

The protein belongs to the NAD kinase family. The cofactor is a divalent metal cation.

The protein resides in the cytoplasm. The catalysed reaction is NAD(+) + ATP = ADP + NADP(+) + H(+). In terms of biological role, involved in the regulation of the intracellular balance of NAD and NADP, and is a key enzyme in the biosynthesis of NADP. Catalyzes specifically the phosphorylation on 2'-hydroxyl of the adenosine moiety of NAD to yield NADP. The sequence is that of NAD kinase from Flavobacterium psychrophilum (strain ATCC 49511 / DSM 21280 / CIP 103535 / JIP02/86).